The sequence spans 295 residues: Ribosomal protein L11 methyltransferase (295 aa).

S-adenosyl-L-methionine contacts are provided by threonine 150, glycine 171, aspartate 193, and asparagine 232.

It belongs to the methyltransferase superfamily. PrmA family.

Its subcellular location is the cytoplasm. It carries out the reaction L-lysyl-[protein] + 3 S-adenosyl-L-methionine = N(6),N(6),N(6)-trimethyl-L-lysyl-[protein] + 3 S-adenosyl-L-homocysteine + 3 H(+). Methylates ribosomal protein L11. This is Ribosomal protein L11 methyltransferase from Neisseria gonorrhoeae (strain ATCC 700825 / FA 1090).